A 154-amino-acid polypeptide reads, in one-letter code: D-aminoacyl-tRNA deacylase (154 aa).

The Gly-cisPro motif, important for rejection of L-amino acids signature appears at 142-143 (GP).

Belongs to the DTD family. As to quaternary structure, homodimer.

Its subcellular location is the cytoplasm. It carries out the reaction glycyl-tRNA(Ala) + H2O = tRNA(Ala) + glycine + H(+). The catalysed reaction is a D-aminoacyl-tRNA + H2O = a tRNA + a D-alpha-amino acid + H(+). In terms of biological role, an aminoacyl-tRNA editing enzyme that deacylates mischarged D-aminoacyl-tRNAs. Also deacylates mischarged glycyl-tRNA(Ala), protecting cells against glycine mischarging by AlaRS. Acts via tRNA-based rather than protein-based catalysis; rejects L-amino acids rather than detecting D-amino acids in the active site. By recycling D-aminoacyl-tRNA to D-amino acids and free tRNA molecules, this enzyme counteracts the toxicity associated with the formation of D-aminoacyl-tRNA entities in vivo and helps enforce protein L-homochirality. This chain is D-aminoacyl-tRNA deacylase (DTD1), found in Yarrowia lipolytica (strain CLIB 122 / E 150) (Yeast).